The sequence spans 121 residues: uncharacterized protein (121 aa).

Positions 12 to 24 are enriched in low complexity; that stretch reads EEGGASAAAPDAS. Disordered stretches follow at residues 12-63 and 101-121; these read EEGG…RLEP and KKLA…SPVV. A compositionally biased stretch (basic residues) spans 26–35; it reads KSKKGARPCF. Positions 40-49 are enriched in polar residues; that stretch reads QAGSCMTGRQ. A compositionally biased stretch (basic and acidic residues) spans 112–121; the sequence is GSQKERSPVV.

This is an uncharacterized protein from Homo sapiens (Human).